A 147-amino-acid chain; its full sequence is MVALFKSSLGRPEQHQTPQIRISPASSNVEHSEKQPRRDFRVKKYVAPGFSQLNWSKLVASGQNLSGVEKPIPVTKEELAKHKTKEDCWIAIRGKVYNVSAYLPYHPAGQKRILDYAGRDATVIFMKFHAWVNEEALLKTSFVGFLV.

The disordered stretch occupies residues 1 to 37 (MVALFKSSLGRPEQHQTPQIRISPASSNVEHSEKQPR). Residues 15–29 (HQTPQIRISPASSNV) are compositionally biased toward polar residues. A Cytochrome b5 heme-binding domain is found at 71–147 (PIPVTKEELA…LKTSFVGFLV (77 aa)). 2 residues coordinate heme: His-106 and His-129.

The protein belongs to the cytochrome b5 family.

This is an uncharacterized protein from Schizosaccharomyces pombe (strain 972 / ATCC 24843) (Fission yeast).